A 403-amino-acid polypeptide reads, in one-letter code: S-adenosylmethionine synthase (403 aa).

His17 lines the ATP pocket. Mg(2+) is bound at residue Asp19. Glu45 contributes to the K(+) binding site. The L-methionine site is built by Glu58 and Gln104. Residues Gln104–Thr114 form a flexible loop region. Residues Asp179–Lys181, Lys250–Phe251, Asp259, Arg265–Lys266, Ala282, and Lys286 each bind ATP. Position 259 (Asp259) interacts with L-methionine. Lys290 contacts L-methionine.

It belongs to the AdoMet synthase family. As to quaternary structure, homotetramer; dimer of dimers. Mg(2+) serves as cofactor. The cofactor is K(+).

Its subcellular location is the cytoplasm. The enzyme catalyses L-methionine + ATP + H2O = S-adenosyl-L-methionine + phosphate + diphosphate. It participates in amino-acid biosynthesis; S-adenosyl-L-methionine biosynthesis; S-adenosyl-L-methionine from L-methionine: step 1/1. Its function is as follows. Catalyzes the formation of S-adenosylmethionine (AdoMet) from methionine and ATP. The overall synthetic reaction is composed of two sequential steps, AdoMet formation and the subsequent tripolyphosphate hydrolysis which occurs prior to release of AdoMet from the enzyme. The chain is S-adenosylmethionine synthase from Mycobacterium leprae (strain Br4923).